The chain runs to 1077 residues: Semaphorin-5A (1077 aa).

The first 21 residues, 1 to 21 (MKGACILAWLFSSLGVWRLAR), serve as a signal peptide directing secretion. At 22 to 971 (PETQDPAKCQ…RCGEFNMFHM (950 aa)) the chain is on the extracellular side. In terms of domain architecture, Sema spans 35–484 (HPVVSYKEIG…LQEHVAKIPL (450 aa)). Disulfide bonds link C104/C114 and C131/C140. N-linked (GlcNAc...) asparagine glycans are attached at residues N147, N168, N227, and N277. Intrachain disulfides connect C254–C357 and C278–C320. Residues N323 and N367 are each glycosylated (N-linked (GlcNAc...) asparagine). Cystine bridges form between C487/C504 and C496/C513. N536 and N591 each carry an N-linked (GlcNAc...) asparagine glycan. TSP type-1 domains are found at residues 540-593 (DGSF…TNCS), 595-651 (NGGW…LLCP), 653-702 (HVFW…NACP), 707-765 (TTPW…GCST), 784-839 (NGAW…LPCP), 841-896 (DGVW…QTCP), and 897-944 (ESWS…VFDS). 6 disulfide bridges follow: C607-C644, C611-C650, C622-C634, C665-C696, C669-C701, and C680-C686. Residue N717 is glycosylated (N-linked (GlcNAc...) asparagine). Disulfide bonds link C796–C833, C800–C838, C811–C823, C853–C890, C857–C895, and C868–C880. A glycan (N-linked (GlcNAc...) asparagine) is linked at N933. The helical transmembrane segment at 972–992 (FHMMAVGLSSSILGCLLTLLV) threads the bilayer. Topologically, residues 993 to 1077 (YTYCQRYQQQ…FTDLNNYDEY (85 aa)) are cytoplasmic.

This sequence belongs to the semaphorin family. As to quaternary structure, binds PLXNB3. In adult, detected in liver, brain, kidney, heart, lung and spleen.

The protein localises to the membrane. Bifunctional axonal guidance cue regulated by sulfated proteoglycans; attractive effects result from interactions with heparan sulfate proteoglycans (HSPGs), while the inhibitory effects depend on interactions with chondroitin sulfate proteoglycans (CSPGs). Ligand for receptor PLXNB3. In glioma cells, SEMA5A stimulation of PLXNB3 results in the disassembly of F-actin stress fibers, disruption of focal adhesions and cellular collapse as well as inhibition of cell migration and invasion through ARHGDIA-mediated inactivation of RAC1. May promote angiogenesis by increasing endothelial cell proliferation and migration and inhibiting apoptosis. The protein is Semaphorin-5A (Sema5a) of Mus musculus (Mouse).